The sequence spans 88 residues: Small ribosomal subunit protein uS17 (88 aa).

The protein belongs to the universal ribosomal protein uS17 family. As to quaternary structure, part of the 30S ribosomal subunit.

Its function is as follows. One of the primary rRNA binding proteins, it binds specifically to the 5'-end of 16S ribosomal RNA. This is Small ribosomal subunit protein uS17 from Ectopseudomonas mendocina (strain ymp) (Pseudomonas mendocina).